The primary structure comprises 603 residues: Phosphoenolpyruvate carboxykinase [GTP] (603 aa).

Substrate-binding positions include R87 and 209 to 211 (YAG). K218 and H237 together coordinate Mn(2+). A substrate-binding site is contributed by S258. Position 259 to 264 (259 to 264 (GSGKTS)) interacts with GTP. Residue S260 is part of the active site. D275 is a Mn(2+) binding site. 365-367 (NAR) lines the substrate pocket. Residues R367 and R398 each contribute to the GTP site.

Belongs to the phosphoenolpyruvate carboxykinase [GTP] family. The cofactor is Mn(2+).

The protein localises to the cytoplasm. The enzyme catalyses oxaloacetate + GTP = phosphoenolpyruvate + GDP + CO2. It functions in the pathway carbohydrate biosynthesis; gluconeogenesis. Catalyzes the conversion of oxaloacetate (OAA) to phosphoenolpyruvate (PEP), the rate-limiting step in the metabolic pathway that produces glucose from lactate and other precursors derived from the citric acid cycle. This is Phosphoenolpyruvate carboxykinase [GTP] from Saccharolobus solfataricus (strain ATCC 35092 / DSM 1617 / JCM 11322 / P2) (Sulfolobus solfataricus).